A 113-amino-acid polypeptide reads, in one-letter code: Retrotransposon Gag-like protein 8C (113 aa).

The protein belongs to the FAM127 family.

The sequence is that of Retrotransposon Gag-like protein 8C from Homo sapiens (Human).